The following is a 341-amino-acid chain: Myb-related transcription factor, partner of profilin (341 aa).

The Myb-like domain occupies 8 to 80 (VTRLRKPRFS…EVQKRWNDFK (73 aa)). Disordered regions lie at residues 84-103 (KEKL…EEAM), 180-210 (LPHL…PSGV), and 309-341 (AEPP…WKNL). Residues 184 to 200 (TPSPDPSECPSPPPPGS) show a composition bias toward pro residues. The span at 321–341 (NKRKRFGYLSQRKRRGRWKNL) shows a compositional bias: basic residues.

The protein resides in the nucleus. Functionally, transcriptional repressor; DNA-binding protein that specifically recognizes the core sequence 5'-YAAC[GT]G-3'. The polypeptide is Myb-related transcription factor, partner of profilin (mypop) (Xenopus laevis (African clawed frog)).